Consider the following 473-residue polypeptide: Purple acid phosphatase 1 (473 aa).

Positions 1-38 (MRLVVVGLWCLILGLILNPTKFCDAGVTSSYVRKSLSA) are cleaved as a signal peptide. An N-linked (GlcNAc...) asparagine glycan is attached at N118. D172 provides a ligand contact to Fe cation. Residue N180 is glycosylated (N-linked (GlcNAc...) asparagine). Fe cation is bound by residues D201 and Y204. Position 201 (D201) interacts with Mn(2+). N238 lines the Mn(2+) pocket. Substrate is bound at residue N238. N311 carries an N-linked (GlcNAc...) asparagine glycan. Residue H323 participates in Mn(2+) binding. H333 acts as the Proton donor in catalysis. H360 lines the Mn(2+) pocket. Position 360–362 (360–362 (HVH)) interacts with substrate. Residue H362 participates in Fe cation binding. N433 carries N-linked (GlcNAc...) asparagine glycosylation.

This sequence belongs to the metallophosphoesterase superfamily. Purple acid phosphatase family. In terms of assembly, homodimer; disulfide-linked. Requires Fe cation as cofactor. Mn(2+) serves as cofactor. The cofactor is Zn(2+). Cu(2+) is required as a cofactor. It depends on Mg(2+) as a cofactor.

The protein localises to the secreted. The catalysed reaction is a phosphate monoester + H2O = an alcohol + phosphate. This is Purple acid phosphatase 1 (PAP1) from Ipomoea batatas (Sweet potato).